The sequence spans 118 residues: UPF0102 protein Lxx14785 (118 aa).

The protein belongs to the UPF0102 family.

In Leifsonia xyli subsp. xyli (strain CTCB07), this protein is UPF0102 protein Lxx14785.